The sequence spans 42 residues: Photosystem I reaction center subunit IX (42 aa).

A helical transmembrane segment spans residues 7-27 (YLSVAPVLSTLWFGSLAGLLI).

It belongs to the PsaJ family.

The protein resides in the plastid. Its subcellular location is the chloroplast thylakoid membrane. Its function is as follows. May help in the organization of the PsaE and PsaF subunits. The chain is Photosystem I reaction center subunit IX from Lepidium virginicum (Virginia pepperweed).